We begin with the raw amino-acid sequence, 467 residues long: Histidine--tRNA ligase (467 aa).

Belongs to the class-II aminoacyl-tRNA synthetase family. Homodimer.

It is found in the cytoplasm. It catalyses the reaction tRNA(His) + L-histidine + ATP = L-histidyl-tRNA(His) + AMP + diphosphate + H(+). The polypeptide is Histidine--tRNA ligase (Gloeobacter violaceus (strain ATCC 29082 / PCC 7421)).